A 1492-amino-acid chain; its full sequence is Condensin-2 complex subunit D3-L (1492 aa).

A disordered region spans residues 152–201 (WPRDPNASRKRKKDTLKSSQGDNRGGRKRPRPPRRDEQEMEDLSEEEQDE). Residues 189 to 201 (QEMEDLSEEEQDE) are compositionally biased toward acidic residues. 3 HEAT repeats span residues 543–581 (SSDG…CHLI), 583–619 (CSSE…AQPH), and 621–659 (VLIQ…QSIT). Disordered stretches follow at residues 1269–1345 (QLER…PRPR), 1359–1406 (RKAA…SLVG), and 1454–1492 (IMSP…KPSN). The segment covering 1277-1290 (NVQNPPSAESTGSP) has biased composition (polar residues). A compositionally biased stretch (low complexity) spans 1377-1388 (PSTPSPARTTSS).

Component of the condensin-2 complex, which contains the smc2 and smc4 heterodimer, and three non SMC subunits, ncapg2, ncaph2 and ncapd3 that probably regulate the complex.

The protein localises to the nucleus. In terms of biological role, regulatory subunit of the condensin-2 complex, a complex which establishes mitotic chromosome architecture and is involved in physical rigidity of the chromatid axis. The sequence is that of Condensin-2 complex subunit D3-L from Xenopus laevis (African clawed frog).